A 379-amino-acid chain; its full sequence is Probable peptidoglycan glycosyltransferase FtsW (379 aa).

Over 1-15 (MHKTEAQTYLLYDRT) the chain is Cytoplasmic. Residues 16-36 (LLLLTMGLVGIGLVMVISTSM) form a helical membrane-spanning segment. At 37 to 52 (PIGVRLSEDPFYFARR) the chain is on the periplasmic side. A helical membrane pass occupies residues 53–73 (YAFYLGLAVVLSLVTLGIPMA). The Cytoplasmic portion of the chain corresponds to 74 to 79 (SWQRGS). The chain crosses the membrane as a helical span at residues 80 to 100 (SLILLITLIMLLLVLIAGQSV). The Periplasmic portion of the chain corresponds to 101 to 113 (NGAVRWLALGPWR). A helical membrane pass occupies residues 114 to 133 (IQPAELSKLALFCYLASYLV). Residues 134–139 (RKAEEV) lie on the Cytoplasmic side of the membrane. Residues 140–162 (RTNFWGFCKPIGVMVLLAILLLA) form a helical membrane-spanning segment. Over 163-165 (QPD) the chain is Periplasmic. The chain crosses the membrane as a helical span at residues 166–183 (LGTVLVLFITTLAMLFLA). Residues 184-186 (EAK) lie on the Cytoplasmic side of the membrane. The helical transmembrane segment at 187–207 (IWQFLPIIGTGILAVMLLIIA) threads the bilayer. Residues 208–269 (KPYRRRRVTS…TEAHTDFICS (62 aa)) are Periplasmic-facing. Residues 270-290 (ILGEELGYFGVLLALLMVFLV) form a helical membrane-spanning segment. Topologically, residues 291 to 301 (AFRAMSIGRKA) are cytoplasmic. Residues 302-322 (LAINQIFSGFLACSIGIWFSF) traverse the membrane as a helical segment. Topologically, residues 323-342 (QTMVNVGAAAGMLPTKGLTL) are periplasmic. Residues 343–363 (PFISYGGSSMLIMLTAIVLLI) traverse the membrane as a helical segment. Topologically, residues 364-379 (RIDFETRLAKLQAFVR) are cytoplasmic.

It belongs to the SEDS family. FtsW subfamily.

The protein resides in the cell inner membrane. It catalyses the reaction [GlcNAc-(1-&gt;4)-Mur2Ac(oyl-L-Ala-gamma-D-Glu-L-Lys-D-Ala-D-Ala)](n)-di-trans,octa-cis-undecaprenyl diphosphate + beta-D-GlcNAc-(1-&gt;4)-Mur2Ac(oyl-L-Ala-gamma-D-Glu-L-Lys-D-Ala-D-Ala)-di-trans,octa-cis-undecaprenyl diphosphate = [GlcNAc-(1-&gt;4)-Mur2Ac(oyl-L-Ala-gamma-D-Glu-L-Lys-D-Ala-D-Ala)](n+1)-di-trans,octa-cis-undecaprenyl diphosphate + di-trans,octa-cis-undecaprenyl diphosphate + H(+). Its pathway is cell wall biogenesis; peptidoglycan biosynthesis. In terms of biological role, peptidoglycan polymerase that is essential for cell division. This is Probable peptidoglycan glycosyltransferase FtsW from Moranella endobia (strain PCIT).